Here is a 108-residue protein sequence, read N- to C-terminus: DNA-directed RNA polymerase subunit omega (108 aa).

Residues 1 to 32 are disordered; the sequence is MTNSQSDAALAAVPDRFDPSAGGPGAYDTPLG.

This sequence belongs to the RNA polymerase subunit omega family. The RNAP catalytic core consists of 2 alpha, 1 beta, 1 beta' and 1 omega subunit. When a sigma factor is associated with the core the holoenzyme is formed, which can initiate transcription.

The catalysed reaction is RNA(n) + a ribonucleoside 5'-triphosphate = RNA(n+1) + diphosphate. In terms of biological role, promotes RNA polymerase assembly. Latches the N- and C-terminal regions of the beta' subunit thereby facilitating its interaction with the beta and alpha subunits. The protein is DNA-directed RNA polymerase subunit omega of Mycobacterium avium (strain 104).